The primary structure comprises 686 residues: NADH-ubiquinone oxidoreductase chain 5 (686 aa).

The next 17 helical transmembrane spans lie at 3-23 (LIILFLPFVGAFISGFLGRFV), 40-60 (ALLSLYYWLSINELIIGLFSF), 101-121 (ITLPFLFTVLFISFLIHLFSV), 139-159 (LFTFFMAILVTGANYFVLFVG), 160-180 (WEGIGVVSYLLINFWFTRIQA), 198-218 (LSIAYFVMLPAFGSADFSTVF), 222-242 (AYINQTTITIIGFLLLVGAMA), 261-281 (TPVSALIHAATLVTAGSYLLI), 293-313 (VLLVITIIGASTAFFAATCGL), 321-341 (IIAFSTISQLGYMVMAIGLSQ), 350-370 (LFHAYFKALLFLGAGSVIHAF), 382-402 (LINFLPFTYAVMLVGTLSLLA), 432-452 (ILGSVTAGLTAFYSFRLISLV), 472-492 (ITVIIPLAVLAIFSIFFGYVT), 526-546 (LIFKLLPTIFSLAGTLFALYL), 635-655 (ALYITLGLLSLLFIVFAPMLV), and 665-685 (LIILFIFTLIVNSAYLNKKLS).

The protein belongs to the complex I subunit 5 family.

The protein localises to the mitochondrion inner membrane. It carries out the reaction a ubiquinone + NADH + 5 H(+)(in) = a ubiquinol + NAD(+) + 4 H(+)(out). Core subunit of the mitochondrial membrane respiratory chain NADH dehydrogenase (Complex I) that is believed to belong to the minimal assembly required for catalysis. Complex I functions in the transfer of electrons from NADH to the respiratory chain. The immediate electron acceptor for the enzyme is believed to be ubiquinone. The protein is NADH-ubiquinone oxidoreductase chain 5 (ND5) of Schizophyllum commune (Split gill fungus).